The sequence spans 245 residues: Ubiquinone/menaquinone biosynthesis C-methyltransferase UbiE (245 aa).

S-adenosyl-L-methionine-binding positions include threonine 71, aspartate 92, and 118–119; that span reads DA.

This sequence belongs to the class I-like SAM-binding methyltransferase superfamily. MenG/UbiE family.

It catalyses the reaction a 2-demethylmenaquinol + S-adenosyl-L-methionine = a menaquinol + S-adenosyl-L-homocysteine + H(+). The catalysed reaction is a 2-methoxy-6-(all-trans-polyprenyl)benzene-1,4-diol + S-adenosyl-L-methionine = a 5-methoxy-2-methyl-3-(all-trans-polyprenyl)benzene-1,4-diol + S-adenosyl-L-homocysteine + H(+). The protein operates within quinol/quinone metabolism; menaquinone biosynthesis; menaquinol from 1,4-dihydroxy-2-naphthoate: step 2/2. It participates in cofactor biosynthesis; ubiquinone biosynthesis. Methyltransferase required for the conversion of demethylmenaquinol (DMKH2) to menaquinol (MKH2) and the conversion of 2-polyprenyl-6-methoxy-1,4-benzoquinol (DDMQH2) to 2-polyprenyl-3-methyl-6-methoxy-1,4-benzoquinol (DMQH2). This chain is Ubiquinone/menaquinone biosynthesis C-methyltransferase UbiE, found in Neisseria gonorrhoeae (strain ATCC 700825 / FA 1090).